Here is a 353-residue protein sequence, read N- to C-terminus: MEGYLVLEDGTSFSGELDGHENCTGEAVFFTGMTGYQEVLTDPSYKGQIIVFTYPLIGNYGINEKDFESKKPQVKAAVVYEACDHFSHYEAVYSLKEYLQKWNIPLLTHVDTRAVVKKIRANGTMGATVTASKEGAEIALQPENVAEQASAQEISTFGDGNKHIALIDFGYKKSIASSLVKRGCKVTVVPYQQMEAVYNIKPDGIVLSNGPGDPKAIQPYLGKIKSIISRFPTLGICLGHQLIALAFGGNTFKLPFGHRGANHPVIDRKTKRVFMTSQNHSYVVDEQSINEEELTIRFHHVNDTSVEGLAHKKLPVMSVQFHPEAHPGPAESEWIFDDYLKNVIPARREIAHA.

The segment at 1–162 is CPSase; sequence MEGYLVLEDG…EISTFGDGNK (162 aa). Positions 44, 210, and 212 each coordinate L-glutamine. Positions 163 to 349 constitute a Glutamine amidotransferase type-1 domain; it reads HIALIDFGYK…LKNVIPARRE (187 aa). Catalysis depends on C237, which acts as the Nucleophile. The L-glutamine site is built by L238, Q241, N279, and Y282. Catalysis depends on residues H322 and E324.

It belongs to the CarA family. As to quaternary structure, composed of two chains; the small (or glutamine) chain promotes the hydrolysis of glutamine to ammonia, which is used by the large (or ammonia) chain to synthesize carbamoyl phosphate. Tetramer of heterodimers (alpha,beta)4.

It catalyses the reaction hydrogencarbonate + L-glutamine + 2 ATP + H2O = carbamoyl phosphate + L-glutamate + 2 ADP + phosphate + 2 H(+). The enzyme catalyses L-glutamine + H2O = L-glutamate + NH4(+). It participates in amino-acid biosynthesis; L-arginine biosynthesis; carbamoyl phosphate from bicarbonate: step 1/1. Functionally, small subunit of the glutamine-dependent carbamoyl phosphate synthetase (CPSase). CPSase catalyzes the formation of carbamoyl phosphate from the ammonia moiety of glutamine, carbonate, and phosphate donated by ATP, constituting the first step of the biosynthetic pathway leading to arginine and/or urea. The small subunit (glutamine amidotransferase) binds and cleaves glutamine to supply the large subunit with the substrate ammonia. This is Carbamoyl phosphate synthase arginine-specific small chain from Bacillus subtilis (strain 168).